We begin with the raw amino-acid sequence, 333 residues long: Photosystem II assembly lipoprotein Ycf48 (333 aa).

An N-terminal signal peptide occupies residues 1–23; that stretch reads MKRLLNSATQLLLVLVLGISLSG. Cys24 carries N-palmitoyl cysteine lipidation. Cys24 is lipidated: S-diacylglycerol cysteine.

It belongs to the Ycf48 family. As to quaternary structure, part of early PSII assembly complexes which includes D1 (psbA) and PsbI; not found in mature PSII. Binds to the lumenal side of PSII complexes. Interacts with YidC.

It localises to the cellular thylakoid membrane. Its function is as follows. A factor required for optimal assembly of photosystem II (PSII), acting in the early stages of PSII assembly. Also plays a role in replacement of photodamaged D1 (psbA). Assists YidC in synthesis of chlorophyll-binding proteins. The protein is Photosystem II assembly lipoprotein Ycf48 of Synechococcus sp. (strain CC9605).